We begin with the raw amino-acid sequence, 128 residues long: Small nuclear ribonucleoprotein associated homolog 13 (128 aa).

This sequence belongs to the eukaryotic ribosomal protein eL8 family.

Its subcellular location is the nucleus. It localises to the nucleolus. In terms of biological role, binds to the 5'-stem-loop of U4 snRNA and may play a role in the late stage of spliceosome assembly. The protein undergoes a conformational change upon RNA-binding. The sequence is that of Small nuclear ribonucleoprotein associated homolog 13 from Caenorhabditis elegans.